Here is a 179-residue protein sequence, read N- to C-terminus: Peptide methionine sulfoxide reductase MsrA (179 aa).

The active site involves cysteine 14.

This sequence belongs to the MsrA Met sulfoxide reductase family.

It carries out the reaction L-methionyl-[protein] + [thioredoxin]-disulfide + H2O = L-methionyl-(S)-S-oxide-[protein] + [thioredoxin]-dithiol. The enzyme catalyses [thioredoxin]-disulfide + L-methionine + H2O = L-methionine (S)-S-oxide + [thioredoxin]-dithiol. In terms of biological role, has an important function as a repair enzyme for proteins that have been inactivated by oxidation. Catalyzes the reversible oxidation-reduction of methionine sulfoxide in proteins to methionine. This is Peptide methionine sulfoxide reductase MsrA from Nitrobacter winogradskyi (strain ATCC 25391 / DSM 10237 / CIP 104748 / NCIMB 11846 / Nb-255).